We begin with the raw amino-acid sequence, 95 residues long: MRNYETLFILNPSLDEEATKAAIEKFKGVIEKEGGVVENVDEWGRRKLAYPINKVNEGYYTLINFKANPELPRELERVFRITDGVMRFMVVNPEK.

It belongs to the bacterial ribosomal protein bS6 family.

Its function is as follows. Binds together with bS18 to 16S ribosomal RNA. This chain is Small ribosomal subunit protein bS6, found in Clostridium novyi (strain NT).